The sequence spans 138 residues: Protein PsiE homolog (138 aa).

Transmembrane regions (helical) follow at residues 12–34, 56–76, 84–104, and 109–129; these read YLLQ…ALLI, YEML…ALII, HFPL…LIII, and AIST…FFIA.

The protein belongs to the PsiE family.

The protein localises to the cell membrane. The polypeptide is Protein PsiE homolog (Bacillus subtilis (strain 168)).